The primary structure comprises 183 residues: tRNA-splicing endonuclease (183 aa).

Catalysis depends on residues tyrosine 120, histidine 128, and lysine 159.

This sequence belongs to the tRNA-intron endonuclease family. Archaeal short subfamily. As to quaternary structure, homotetramer; although the tetramer contains four active sites, only two participate in the cleavage. Therefore, it should be considered as a dimer of dimers.

The enzyme catalyses pretRNA = a 3'-half-tRNA molecule with a 5'-OH end + a 5'-half-tRNA molecule with a 2',3'-cyclic phosphate end + an intron with a 2',3'-cyclic phosphate and a 5'-hydroxyl terminus.. Its function is as follows. Endonuclease that removes tRNA introns. Cleaves pre-tRNA at the 5'- and 3'-splice sites to release the intron. The products are an intron and two tRNA half-molecules bearing 2',3' cyclic phosphate and 5'-OH termini. Recognizes a pseudosymmetric substrate in which 2 bulged loops of 3 bases are separated by a stem of 4 bp. The sequence is that of tRNA-splicing endonuclease from Pyrobaculum islandicum (strain DSM 4184 / JCM 9189 / GEO3).